A 494-amino-acid polypeptide reads, in one-letter code: MKYNDLRDFLTLLEQQGELKRITLPVDPHLEITEIADRTLRAGGPALLFENPKGYSMPVLCNLFGTPKRVAMGMGQEDVSALREVGKLLAFLKEPEPPKGFRDLFDKLPQFKQVLNMPTKRLRGAPCQQKIVSGDDVDLNRIPIMTCWPEDAAPLITWGLTVTRGPHKERQNLGIYRQQLIGKNKLIMRWLSHRGGALDYQEWCAAHPGERFPVSVALGADPATILGAVTPVPDTLSEYAFAGLLRGTKTEVVKCISNDLEVPASAEIVLEGYIDPDEMAPEGPYGDHTGYYNEVDSFPVFTVTHITQREDAIYHSTYTGRPPDEPAVLGVALNEVFVPILQKQFPEIVDFYLPPEGCSYRLAVVTIKKQYAGHAKRVMMGVWSFLRQFMYTKFVIVCDDDVNARDWNDVIWAITTRMDPARDTVLVENTPIDYLDFASPVSGLGSKMGLDATNKWPGETQREWGRPIKKDPDVVAHIDAIWDELAIFNNGKSA.

A Mn(2+)-binding site is contributed by Asn172. Prenylated FMN-binding positions include Ile175–Arg177, Arg189–Leu191, and Arg194–Gly195. Glu238 is a binding site for Mn(2+). The active-site Proton donor is the Asp287.

This sequence belongs to the UbiD family. Homohexamer. The cofactor is prenylated FMN. Mn(2+) serves as cofactor.

It localises to the cell membrane. It catalyses the reaction a 4-hydroxy-3-(all-trans-polyprenyl)benzoate + H(+) = a 2-(all-trans-polyprenyl)phenol + CO2. The protein operates within cofactor biosynthesis; ubiquinone biosynthesis. In terms of biological role, catalyzes the decarboxylation of 3-octaprenyl-4-hydroxy benzoate to 2-octaprenylphenol, an intermediate step in ubiquinone biosynthesis. The chain is 3-octaprenyl-4-hydroxybenzoate carboxy-lyase from Shigella flexneri serotype 5b (strain 8401).